Here is a 547-residue protein sequence, read N- to C-terminus: Probable hydroxyacid-oxoacid transhydrogenase, mitochondrial (547 aa).

The protein belongs to the iron-containing alcohol dehydrogenase family. Hydroxyacid-oxoacid transhydrogenase subfamily.

The protein localises to the mitochondrion. The catalysed reaction is (S)-3-hydroxybutanoate + 2-oxoglutarate = (R)-2-hydroxyglutarate + acetoacetate. It catalyses the reaction 4-hydroxybutanoate + 2-oxoglutarate = (R)-2-hydroxyglutarate + succinate semialdehyde. Functionally, catalyzes the cofactor-independent reversible oxidation of gamma-hydroxybutyrate (GHB) to succinic semialdehyde (SSA) coupled to reduction of 2-ketoglutarate (2-KG) to D-2-hydroxyglutarate (D-2-HG). L-3-hydroxybutyrate (L-3-OHB) is also a substrate for HOT when using 2-KG as hydrogen acceptor, resulting in the formation of D-2-HG. The protein is Probable hydroxyacid-oxoacid transhydrogenase, mitochondrial (adhfe1) of Dictyostelium discoideum (Social amoeba).